A 263-amino-acid polypeptide reads, in one-letter code: Chromosomal replication initiator protein DnaA (263 aa).

Position 1 (E1) is a region of interest, domain I, interacts with DnaA modulators. Position 1 (E1) is a region of interest, domain II. Residues 1–179 are domain III, AAA+ region; that stretch reads ESGMGKTHLL…GSVSRLNFWS (179 aa). 4 residues coordinate ATP: G3, G5, K6, and T7. Residues 180-263 are domain IV, binds dsDNA; the sequence is QQNPEEKIIT…HTLAQIGEEF (84 aa).

Belongs to the DnaA family. Oligomerizes as a right-handed, spiral filament on DNA at oriC.

Its subcellular location is the cytoplasm. In terms of biological role, plays an essential role in the initiation and regulation of chromosomal replication. ATP-DnaA binds to the origin of replication (oriC) to initiate formation of the DNA replication initiation complex once per cell cycle. Binds the DnaA box (a 9 base pair repeat at the origin) and separates the double-stranded (ds)DNA. Forms a right-handed helical filament on oriC DNA; dsDNA binds to the exterior of the filament while single-stranded (ss)DNA is stabiized in the filament's interior. The ATP-DnaA-oriC complex binds and stabilizes one strand of the AT-rich DNA unwinding element (DUE), permitting loading of DNA polymerase. After initiation quickly degrades to an ADP-DnaA complex that is not apt for DNA replication. Binds acidic phospholipids. The sequence is that of Chromosomal replication initiator protein DnaA from Mycoplasma mycoides.